A 157-amino-acid polypeptide reads, in one-letter code: Protein Smg homolog (157 aa).

Belongs to the Smg family.

The chain is Protein Smg homolog from Pseudoalteromonas translucida (strain TAC 125).